An 81-amino-acid chain; its full sequence is Cytochrome b559 subunit alpha (81 aa).

Residues 21 to 35 form a helical membrane-spanning segment; the sequence is VIHSITIPMLFVAGW. His-23 is a binding site for heme.

The protein belongs to the PsbE/PsbF family. In terms of assembly, heterodimer of an alpha subunit and a beta subunit. PSII is composed of 1 copy each of membrane proteins PsbA, PsbB, PsbC, PsbD, PsbE, PsbF, PsbH, PsbI, PsbJ, PsbK, PsbL, PsbM, PsbT, PsbX, PsbY, PsbZ, Psb30/Ycf12, peripheral proteins PsbO, CyanoQ (PsbQ), PsbU, PsbV and a large number of cofactors. It forms dimeric complexes. Heme b is required as a cofactor.

It localises to the cellular thylakoid membrane. This b-type cytochrome is tightly associated with the reaction center of photosystem II (PSII). PSII is a light-driven water:plastoquinone oxidoreductase that uses light energy to abstract electrons from H(2)O, generating O(2) and a proton gradient subsequently used for ATP formation. It consists of a core antenna complex that captures photons, and an electron transfer chain that converts photonic excitation into a charge separation. The sequence is that of Cytochrome b559 subunit alpha from Gloeothece citriformis (strain PCC 7424) (Cyanothece sp. (strain PCC 7424)).